The chain runs to 213 residues: MKNYYLVDEKRKTPVSTWEKISQALRRSVKLELFVGLFVMMRELLKRNNSATIKYPFEKVKLDNRYRAVHRLMRFIESENERCIGCGLCEKICISNCIRMETSLDENGRKKVENYSINLGRCIYCGFCAEVCPELAIVHGTEYENAAEQRSYFGYKQDFLTPIDKLKNQVEFEGAGSLRKDANLWVKKTPNYYDVMIERALENQNTQEQGENK.

4Fe-4S ferredoxin-type domains follow at residues 74-103 and 113-142; these read RFIE…METS and ENYS…HGTE. Residues C83, C86, C89, C93, C122, C125, C128, and C132 each contribute to the [4Fe-4S] cluster site.

This sequence belongs to the complex I 23 kDa subunit family. As to quaternary structure, NDH-1 is composed of 14 different subunits. Subunits NuoA, H, J, K, L, M, N constitute the membrane sector of the complex. The cofactor is [4Fe-4S] cluster.

Its subcellular location is the cell inner membrane. It catalyses the reaction a quinone + NADH + 5 H(+)(in) = a quinol + NAD(+) + 4 H(+)(out). Functionally, NDH-1 shuttles electrons from NADH, via FMN and iron-sulfur (Fe-S) centers, to quinones in the respiratory chain. The immediate electron acceptor for the enzyme in this species is believed to be ubiquinone. Couples the redox reaction to proton translocation (for every two electrons transferred, four hydrogen ions are translocated across the cytoplasmic membrane), and thus conserves the redox energy in a proton gradient. This Campylobacter jejuni subsp. jejuni serotype O:23/36 (strain 81-176) protein is NADH-quinone oxidoreductase subunit I.